A 167-amino-acid chain; its full sequence is Crossover junction endodeoxyribonuclease RuvC (167 aa).

Active-site residues include Asp-7, Glu-67, and Asp-140. Positions 7, 67, and 140 each coordinate Mg(2+).

Belongs to the RuvC family. Homodimer which binds Holliday junction (HJ) DNA. The HJ becomes 2-fold symmetrical on binding to RuvC with unstacked arms; it has a different conformation from HJ DNA in complex with RuvA. In the full resolvosome a probable DNA-RuvA(4)-RuvB(12)-RuvC(2) complex forms which resolves the HJ. Requires Mg(2+) as cofactor.

The protein localises to the cytoplasm. It catalyses the reaction Endonucleolytic cleavage at a junction such as a reciprocal single-stranded crossover between two homologous DNA duplexes (Holliday junction).. Its function is as follows. The RuvA-RuvB-RuvC complex processes Holliday junction (HJ) DNA during genetic recombination and DNA repair. Endonuclease that resolves HJ intermediates. Cleaves cruciform DNA by making single-stranded nicks across the HJ at symmetrical positions within the homologous arms, yielding a 5'-phosphate and a 3'-hydroxyl group; requires a central core of homology in the junction. The consensus cleavage sequence is 5'-(A/T)TT(C/G)-3'. Cleavage occurs on the 3'-side of the TT dinucleotide at the point of strand exchange. HJ branch migration catalyzed by RuvA-RuvB allows RuvC to scan DNA until it finds its consensus sequence, where it cleaves and resolves the cruciform DNA. The sequence is that of Crossover junction endodeoxyribonuclease RuvC from Dehalococcoides mccartyi (strain ATCC BAA-2100 / JCM 16839 / KCTC 5957 / BAV1).